Here is a 210-residue protein sequence, read N- to C-terminus: CLAVATA3/ESR (CLE)-related protein 4A-3 (210 aa).

The signal sequence occupies residues 1–21; it reads MAKNAMLCLLILRVVLALAFA. The tract at residues 21-83 is required for secretion from the host cytoplasm to the host apoplasm; that stretch reads ATNKKGDEEP…SNQLPNNNWM (63 aa). Residue Asn32 is glycosylated (N-linked (GlcNAc...) asparagine). The tract at residues 116–210 is disordered; the sequence is RKTGMHSQRH…APAGPDPIHH (95 aa). 2 stretches are compositionally biased toward basic and acidic residues: residues 125–137 and 144–200; these read HHEE…EKRV and PIHH…EKRG. The A-1 repeat unit spans residues 127–135; the sequence is EETTLEQEK. The tract at residues 127–198 is 4 X approximate repeat A; the sequence is EETTLEQEKR…HEDTTLEQEK (72 aa). One copy of the CLE-1 repeat lies at 136–147; it reads RVAGAGPDPIHH. The 4 X approximate repeat CLE stretch occupies residues 136 to 210; it reads RVAGAGPDPI…APAGPDPIHH (75 aa). Residues 148–156 form an A-2 repeat; sequence QDTTLEQEK. Residues 157–168 form a CLE-2 repeat; sequence RAVPAGPDPKHH. One copy of the A-3 repeat lies at 169 to 177; the sequence is EETTLEQEK. A CLE-3 repeat occupies 178 to 189; it reads RAVPAGPDPKHH. Residues 190–198 form an A-4 repeat; sequence EDTTLEQEK. The stretch at 199–210 is one CLE-4 repeat; the sequence is RGAPAGPDPIHH.

Belongs to the CLV3/ESR signal peptide family. In terms of tissue distribution, highly expressed exclusively within the dorsal esophageal gland cell during syncytium formation in host plants.

It localises to the secreted. Its subcellular location is the host cytoplasm. The protein localises to the host extracellular space. It is found in the extracellular space. The protein resides in the apoplast. Its function is as follows. Mimics host plant CLE extracellular signal peptides that regulate cell fate. May play a role in the differentiation or division of feeding cells (syncytia) induced in plant roots during infection. This chain is CLAVATA3/ESR (CLE)-related protein 4A-3 (CLE-4A-3), found in Globodera rostochiensis (Golden nematode worm).